The following is a 436-amino-acid chain: Citrate synthase (436 aa).

Active-site residues include H313 and D371.

The protein belongs to the citrate synthase family. As to quaternary structure, homohexamer.

The catalysed reaction is oxaloacetate + acetyl-CoA + H2O = citrate + CoA + H(+). It participates in carbohydrate metabolism; tricarboxylic acid cycle; isocitrate from oxaloacetate: step 1/2. The protein is Citrate synthase (aarA) of Acetobacter aceti.